A 63-amino-acid chain; its full sequence is Metallothionein-2 (63 aa).

It belongs to the metallothionein superfamily. Type 6 family.

In terms of biological role, this protein binds cations of several transition elements. This chain is Metallothionein-2 (mtl-2), found in Caenorhabditis elegans.